A 166-amino-acid polypeptide reads, in one-letter code: UPF0304 protein PBPRA2768 (166 aa).

It belongs to the UPF0304 family.

The sequence is that of UPF0304 protein PBPRA2768 from Photobacterium profundum (strain SS9).